Consider the following 212-residue polypeptide: Uridine kinase (212 aa).

ATP is bound at residue 13–20; that stretch reads GGSGSGKT.

The protein belongs to the uridine kinase family.

Its subcellular location is the cytoplasm. It catalyses the reaction uridine + ATP = UMP + ADP + H(+). It carries out the reaction cytidine + ATP = CMP + ADP + H(+). Its pathway is pyrimidine metabolism; CTP biosynthesis via salvage pathway; CTP from cytidine: step 1/3. It participates in pyrimidine metabolism; UMP biosynthesis via salvage pathway; UMP from uridine: step 1/1. The chain is Uridine kinase from Bacillus mycoides (strain KBAB4) (Bacillus weihenstephanensis).